We begin with the raw amino-acid sequence, 495 residues long: Serine/threonine-protein phosphatase 2A regulatory subunit sur-6 (495 aa).

The disordered stretch occupies residues 1 to 27; it reads MVMEVDEPAVAATTSQNQPQEHANDFD. Residues 12–21 are compositionally biased toward polar residues; that stretch reads ATTSQNQPQE. 6 WD repeats span residues 64–103, 130–171, 215–253, 264–304, 323–361, and 378–419; these read TEAD…KYVK, EIDE…RKIG, AHTY…ESFN, ELTE…LCDA, EIIA…QPVE, and ENDS…DAKT. The interval 439–459 is disordered; sequence SAKRKRNNLSSSGETTEEDLS. The stretch at 464–495 is one WD 7 repeat; it reads QFDRKILHTAWHPKDNIIALAATNNLYIFSDV.

The protein belongs to the phosphatase 2A regulatory subunit B family. Part of a complex consisting of a common heterodimeric core enzyme, composed of catalytic subunit let-92 and constant regulatory subunit paa-1, that associates with a variety of regulatory subunits which confer distinct properties to the holoenzyme. Interacts with let-92.

It is found in the cytoplasm. In terms of biological role, probable regulatory subunit of serine/threonine phosphatase let-92. Together with let-92 and constant regulatory subunit paa-1, positively regulates centriole duplication during early embryonic cell divisions by preventing the degradation of sas-5 and kinase zyg-1. In addition, during vulva development, may play a role with phosphatase let-92 and regulatory subunit paa-1 in the induction of vulva cell precursors by positively regulating let-60/Ras-MAP kinase signaling, probably by promoting lin-45 activation. In intestinal epithelial cells, may play a role in the late secretory pathway probably by regulating the exocyst, a protein complex involved in targeting secretory vesicles to the plasma membrane. This Caenorhabditis elegans protein is Serine/threonine-protein phosphatase 2A regulatory subunit sur-6.